The sequence spans 529 residues: Basal body-orientation factor 1 (529 aa).

Positions Met-1–Ser-13 are enriched in basic residues. The segment at Met-1–Ile-22 is disordered. 2 coiled-coil regions span residues Leu-85–Lys-201 and Val-271–Arg-361.

This sequence belongs to the BBOF1 family. In terms of assembly, interacts with MNS1 and ODF2.

Its subcellular location is the cytoplasm. It localises to the cytoskeleton. The protein resides in the cilium basal body. It is found in the flagellum axoneme. In terms of biological role, plays an essential role in sperm motility and male fertility by stabilizing the sperm flagellar axonemal structure. May be required for the stability of ODF2 and MANS1 proteins. Dispensable for the assembly and function of motile cilia. This is Basal body-orientation factor 1 from Homo sapiens (Human).